The sequence spans 308 residues: Urease subunit beta (308 aa).

One can recognise a Urease domain in the interval 131 to 308 (GGIDTHIHFI…STNPTIPFTK (178 aa)). Ni(2+) contacts are provided by H136, H138, K219, H248, and H274. K219 is subject to N6-carboxylysine.

This sequence belongs to the metallo-dependent hydrolases superfamily. Urease alpha subunit family. In terms of assembly, heterohexamer of 3 UreA (alpha) and 3 UreB (beta) subunits. Requires Ni cation as cofactor. Post-translationally, carboxylation allows a single lysine to coordinate two nickel ions.

It localises to the cytoplasm. The enzyme catalyses urea + 2 H2O + H(+) = hydrogencarbonate + 2 NH4(+). It functions in the pathway nitrogen metabolism; urea degradation; CO(2) and NH(3) from urea (urease route): step 1/1. This is Urease subunit beta (ureB) from Helicobacter mustelae.